The sequence spans 198 residues: Recombination protein RecR (198 aa).

The C4-type zinc finger occupies 57–72 (CEKCNTFTEAQICEVC). The Toprim domain maps to 80 to 175 (TLLCVVETPA…AVTRLARGVP (96 aa)).

This sequence belongs to the RecR family.

In terms of biological role, may play a role in DNA repair. It seems to be involved in an RecBC-independent recombinational process of DNA repair. It may act with RecF and RecO. The polypeptide is Recombination protein RecR (Burkholderia vietnamiensis (strain G4 / LMG 22486) (Burkholderia cepacia (strain R1808))).